Here is a 434-residue protein sequence, read N- to C-terminus: Serine hydroxymethyltransferase (434 aa).

A (6S)-5,6,7,8-tetrahydrofolate-binding site is contributed by 120–122 (GHI). Position 236 is an N6-(pyridoxal phosphate)lysine (Lys236). Glu255 is a (6S)-5,6,7,8-tetrahydrofolate binding site.

It belongs to the SHMT family. As to quaternary structure, homodimer. The cofactor is pyridoxal 5'-phosphate.

The protein localises to the cytoplasm. Its pathway is amino-acid biosynthesis; glycine biosynthesis; glycine from L-serine: step 1/1. In terms of biological role, catalyzes the reversible interconversion of serine and glycine with a modified folate serving as the one-carbon carrier. Also exhibits a pteridine-independent aldolase activity toward beta-hydroxyamino acids, producing glycine and aldehydes, via a retro-aldol mechanism. In Korarchaeum cryptofilum (strain OPF8), this protein is Serine hydroxymethyltransferase.